The primary structure comprises 218 residues: MMP 1-O-methyltransferase (218 aa).

Positions 20, 46, 52, 71, 75, and 124 each coordinate S-adenosyl-L-methionine. Position 141 (Asp-141) interacts with Mg(2+). Residue His-144 is the Proton acceptor of the active site. Arg-151 is a binding site for S-adenosyl-L-methionine. Mg(2+)-binding residues include His-169 and Asp-170.

This sequence belongs to the methyltransferase superfamily. In terms of assembly, homodimer. It depends on Mg(2+) as a cofactor.

The enzyme catalyses 3,3'-di-O-methyl-4alpha-mannobiose + S-adenosyl-L-methionine = 1,3,3'-tri-O-methyl-4alpha-mannobiose + S-adenosyl-L-homocysteine + H(+). Its activity is regulated as follows. Inhibited by EDTA. In terms of biological role, involved in the biosynthesis of 3-O-methylmannose polysaccharides (MMP), which are intracellular polymethylated polysaccharides implicated in the modulation of fatty acid metabolism in non-tuberculous mycobacteria. Specifically methylates the 1-OH position of 3,3'-di-O-methyl-4alpha-mannobiose, a probable early precursor of MMP, yielding the reducing end dimannoside of MMP. This chain is MMP 1-O-methyltransferase, found in Mycolicibacterium hassiacum (strain DSM 44199 / CIP 105218 / JCM 12690 / 3849) (Mycobacterium hassiacum).